The following is a 109-amino-acid chain: Putative double-stranded DNA mimic protein YciU (109 aa).

Belongs to the putative dsDNA mimic protein family.

Its function is as follows. May act as a double-stranded DNA (dsDNA) mimic. Probably regulates the activity of a dsDNA-binding protein. The protein is Putative double-stranded DNA mimic protein YciU of Salmonella choleraesuis (strain SC-B67).